We begin with the raw amino-acid sequence, 172 residues long: Ribosome maturation factor RimM (172 aa).

The 73-residue stretch at 96-168 (DGEFYYHEII…RVDVELLEGL (73 aa)) folds into the PRC barrel domain.

The protein belongs to the RimM family. As to quaternary structure, binds ribosomal protein uS19.

The protein resides in the cytoplasm. Its function is as follows. An accessory protein needed during the final step in the assembly of 30S ribosomal subunit, possibly for assembly of the head region. Essential for efficient processing of 16S rRNA. May be needed both before and after RbfA during the maturation of 16S rRNA. It has affinity for free ribosomal 30S subunits but not for 70S ribosomes. This Streptococcus suis (strain 05ZYH33) protein is Ribosome maturation factor RimM.